Here is a 529-residue protein sequence, read N- to C-terminus: Plexin domain-containing protein 2 (529 aa).

The signal sequence occupies residues 1-30 (MARFPKADLAAAGVMLLCHFFTDQFQFADG). The Extracellular portion of the chain corresponds to 31–454 (KPGDQILDWQ…AEKKGGTLHA (424 aa)). Residues 80 to 104 (ASVGQDSPEPRSFTDLLLDDGQDNN) form a disordered region. N-linked (GlcNAc...) asparagine glycans are attached at residues N103 and N160. Positions 327-372 (TCLQFNRCGPCVSSQIGFNCSWCSKLQRCSSGFDRHRQDWVDSGCP) constitute a PSI domain. The helical transmembrane segment at 455–475 (GLIIGILILVLIVATAILVTV) threads the bilayer. Over 476-529 (YMYHHPTSAASIFFIERRPSRWPAMKFRRGSGHPAYAEVEPVGEKEGFIVSEQC) the chain is Cytoplasmic. A Phosphoserine modification is found at S506.

It belongs to the plexin family. Interacts with CTTN. In terms of tissue distribution, expressed in the endothelial cells of the stroma but not in the endothelial cells of normal colonic tissue.

The protein localises to the membrane. Functionally, may play a role in tumor angiogenesis. This Homo sapiens (Human) protein is Plexin domain-containing protein 2 (PLXDC2).